A 1064-amino-acid polypeptide reads, in one-letter code: Valine--tRNA ligase, mitochondrial (1064 aa).

Residues 1–26 (MPHLPLASFRPPFWGLRHSRGLPRFH) constitute a mitochondrion transit peptide. Residues 25 to 65 (FHSVSTQSEPHGSPISRRNREAKQKRLREKQATLETDIAGE) are disordered. Over residues 42 to 56 (RNREAKQKRLREKQA) the composition is skewed to basic and acidic residues. Positions 146–156 (PNVTGSLHIGH) match the 'HIGH' region motif. The short motif at 659-663 (KMSKS) is the 'KMSKS' region element. Residue K662 coordinates ATP.

The protein belongs to the class-I aminoacyl-tRNA synthetase family.

It localises to the mitochondrion. The enzyme catalyses tRNA(Val) + L-valine + ATP = L-valyl-tRNA(Val) + AMP + diphosphate. Functionally, catalyzes the attachment of valine to tRNA(Val) in a two-step reaction: valine is first activated by ATP to form Val-AMP and then transferred to the acceptor end of tRNA(Val). In Macaca mulatta (Rhesus macaque), this protein is Valine--tRNA ligase, mitochondrial (VARS2).